A 453-amino-acid chain; its full sequence is tRNA modification GTPase MnmE (453 aa).

Residues arginine 22, glutamate 79, and lysine 119 each contribute to the (6S)-5-formyl-5,6,7,8-tetrahydrofolate site. Positions 215-376 (GMKVVIAGRP…LKLHLKSLMG (162 aa)) constitute a TrmE-type G domain. A K(+)-binding site is contributed by asparagine 225. GTP contacts are provided by residues 225-230 (NAGKSS), 244-250 (TEIAGTT), 269-272 (DTAG), and 334-337 (NKAD). Serine 229 contacts Mg(2+). Threonine 244, isoleucine 246, and threonine 249 together coordinate K(+). Mg(2+) is bound at residue threonine 250. Position 453 (lysine 453) interacts with (6S)-5-formyl-5,6,7,8-tetrahydrofolate.

The protein belongs to the TRAFAC class TrmE-Era-EngA-EngB-Septin-like GTPase superfamily. TrmE GTPase family. In terms of assembly, homodimer. Heterotetramer of two MnmE and two MnmG subunits. It depends on K(+) as a cofactor.

Its subcellular location is the cytoplasm. In terms of biological role, exhibits a very high intrinsic GTPase hydrolysis rate. Involved in the addition of a carboxymethylaminomethyl (cmnm) group at the wobble position (U34) of certain tRNAs, forming tRNA-cmnm(5)s(2)U34. This Shewanella sp. (strain W3-18-1) protein is tRNA modification GTPase MnmE.